The chain runs to 577 residues: MVQCTLIWAGIGAMMAVSGALLGWVVFPRAVHEKVIEATELRQGTDQYKRWEALPQPLDFKVYIFNVTNPYEVMQGRRPKVVEVGPYVYFQYRQKDNVRFSRDRSKVHFSQQQMYVFDAESSYPLTENDELTVLNMHMNSILQIIDNQAKETITNFRSDVNNTLEKIPVVRVIKRIIERTTPIQSILQLAEDETYDSLRLINVELNRIFGRPDTMFLRTTPKQFLFDGVPFCVNVIGIAKAICKEIEKRNTKTIRTMPDGSLRFSFFSHKNMTDDGMFTINTGIKDPSRTQMIELWNGRTTLDVWNNRSSGLSSSCNKIHGTDGSGYPPFRTGVERMTIFSTDICRTVDIKLTGSSSYEGIPALRYEIDNNFLHEIGPEYGNDCYCVNKIPKSIVKSNGCLYKGALDLSNCFDAPVVLTLPHMLGVAEEYTALIDGMDPEPERHQIFVDVEPYTGTPLNGGKRVQFNMFLRRIDAIKLTDRLQPTLFPVIWIDEGIALNEDMVKLIDDSLMKVLSLLDVVQWVLIGVGLLLAVLMPTVYFVKRCRGEGSRTVSPAVTATTSAASLSTVAGVTGDRSK.

The Cytoplasmic segment spans residues 1 to 6 (MVQCTL). Residues 7 to 27 (IWAGIGAMMAVSGALLGWVVF) traverse the membrane as a helical segment. At 28–519 (PRAVHEKVIE…LMKVLSLLDV (492 aa)) the chain is on the extracellular side. N-linked (GlcNAc...) asparagine glycosylation is found at Asn-66, Asn-161, Asn-271, and Asn-307. 3 disulfide bridges follow: Cys-316/Cys-384, Cys-345/Cys-411, and Cys-386/Cys-400. The helical transmembrane segment at 520–540 (VQWVLIGVGLLLAVLMPTVYF) threads the bilayer. Residues 541 to 577 (VKRCRGEGSRTVSPAVTATTSAASLSTVAGVTGDRSK) lie on the Cytoplasmic side of the membrane.

This sequence belongs to the CD36 family.

The protein resides in the cell membrane. Plays an olfactory role that is not restricted to pheromone sensitivity. The sequence is that of Sensory neuron membrane protein 2 from Anopheles gambiae (African malaria mosquito).